Consider the following 480-residue polypeptide: PTS system sucrose-specific EIIBC component (480 aa).

A PTS EIIB type-1 domain is found at 4 to 87; it reads KKSAENILQA…EKITGKEASS (84 aa). Cys26 serves as the catalytic Phosphocysteine intermediate; for EIIB activity. A run of 8 helical transmembrane segments spans residues 109 to 129, 158 to 178, 182 to 202, 264 to 284, 303 to 323, 349 to 369, 405 to 425, and 449 to 469; these read LSDI…LMGI, MINI…GFSA, FGGN…PELM, LLTP…FVGP, FGGA…VITG, PIAT…FFII, PFIG…FFKV, and LHYG…TYAL. Positions 120–480 constitute a PTS EIIC type-1 domain; the sequence is IVAGGLLMGI…YRKKYRNIEA (361 aa).

Its subcellular location is the cell membrane. The catalysed reaction is N(pros)-phospho-L-histidyl-[protein](out) + sucrose = sucrose 6(G)-phosphate(in) + L-histidyl-[protein]. Its function is as follows. The phosphoenolpyruvate-dependent sugar phosphotransferase system (sugar PTS), a major carbohydrate active transport system, catalyzes the phosphorylation of incoming sugar substrates concomitantly with their translocation across the cell membrane. This system is involved in sucrose transport. The polypeptide is PTS system sucrose-specific EIIBC component (Staphylococcus xylosus).